A 273-amino-acid chain; its full sequence is 4-hydroxy-tetrahydrodipicolinate reductase (273 aa).

NAD(+) contacts are provided by residues 12–17 and E38; that span reads GAGGRM. Position 39 (R39) interacts with NADP(+). Residues 102–104 and 126–129 each bind NAD(+); these read GTT and AANF. Catalysis depends on H159, which acts as the Proton donor/acceptor. A (S)-2,3,4,5-tetrahydrodipicolinate-binding site is contributed by H160. K163 (proton donor) is an active-site residue. A (S)-2,3,4,5-tetrahydrodipicolinate-binding site is contributed by 169–170; sequence GT.

It belongs to the DapB family. In terms of assembly, homotetramer.

The protein resides in the cytoplasm. The enzyme catalyses (S)-2,3,4,5-tetrahydrodipicolinate + NAD(+) + H2O = (2S,4S)-4-hydroxy-2,3,4,5-tetrahydrodipicolinate + NADH + H(+). The catalysed reaction is (S)-2,3,4,5-tetrahydrodipicolinate + NADP(+) + H2O = (2S,4S)-4-hydroxy-2,3,4,5-tetrahydrodipicolinate + NADPH + H(+). It participates in amino-acid biosynthesis; L-lysine biosynthesis via DAP pathway; (S)-tetrahydrodipicolinate from L-aspartate: step 4/4. Catalyzes the conversion of 4-hydroxy-tetrahydrodipicolinate (HTPA) to tetrahydrodipicolinate. This Salmonella arizonae (strain ATCC BAA-731 / CDC346-86 / RSK2980) protein is 4-hydroxy-tetrahydrodipicolinate reductase.